Here is a 919-residue protein sequence, read N- to C-terminus: Phosphoenolpyruvate carboxylase (919 aa).

Residues H138 and K579 contribute to the active site.

Belongs to the PEPCase type 1 family. Requires Mg(2+) as cofactor.

It catalyses the reaction oxaloacetate + phosphate = phosphoenolpyruvate + hydrogencarbonate. In terms of biological role, forms oxaloacetate, a four-carbon dicarboxylic acid source for the tricarboxylic acid cycle. This is Phosphoenolpyruvate carboxylase (ppc) from Corynebacterium efficiens (strain DSM 44549 / YS-314 / AJ 12310 / JCM 11189 / NBRC 100395).